Consider the following 216-residue polypeptide: Octanoyltransferase (216 aa).

In terms of domain architecture, BPL/LPL catalytic spans 35-213 (NSNPDFIWIG…IIQEEFNFDF (179 aa)). Substrate-binding positions include 77–84 (RGGEVTCH), 144–146 (SIG), and 157–159 (GFS). Cys-175 (acyl-thioester intermediate) is an active-site residue.

It belongs to the LipB family.

Its subcellular location is the cytoplasm. It catalyses the reaction octanoyl-[ACP] + L-lysyl-[protein] = N(6)-octanoyl-L-lysyl-[protein] + holo-[ACP] + H(+). The protein operates within protein modification; protein lipoylation via endogenous pathway; protein N(6)-(lipoyl)lysine from octanoyl-[acyl-carrier-protein]: step 1/2. Its function is as follows. Catalyzes the transfer of endogenously produced octanoic acid from octanoyl-acyl-carrier-protein onto the lipoyl domains of lipoate-dependent enzymes. Lipoyl-ACP can also act as a substrate although octanoyl-ACP is likely to be the physiological substrate. The chain is Octanoyltransferase from Prochlorococcus marinus (strain MIT 9215).